The primary structure comprises 436 residues: UPF0597 protein YhaM (436 aa).

Belongs to the UPF0597 family.

The chain is UPF0597 protein YhaM from Shigella dysenteriae serotype 1 (strain Sd197).